A 231-amino-acid chain; its full sequence is Large ribosomal subunit protein uL1 (231 aa).

It belongs to the universal ribosomal protein uL1 family. Part of the 50S ribosomal subunit.

Binds directly to 23S rRNA. The L1 stalk is quite mobile in the ribosome, and is involved in E site tRNA release. In terms of biological role, protein L1 is also a translational repressor protein, it controls the translation of the L11 operon by binding to its mRNA. The chain is Large ribosomal subunit protein uL1 from Francisella tularensis subsp. tularensis (strain WY96-3418).